The primary structure comprises 393 residues: S-adenosylmethionine synthase 4 (393 aa).

E9 is a Mg(2+) binding site. H15 lines the ATP pocket. E43 is a K(+) binding site. Residues E56 and Q99 each contribute to the L-methionine site. Residues 167-169 (DGK), 235-238 (SGRF), D246, 252-253 (RK), A269, K273, and K277 each bind ATP. D246 is a binding site for L-methionine. K277 is an L-methionine binding site.

Belongs to the AdoMet synthase family. As to quaternary structure, homotetramer. The cofactor is Mn(2+). It depends on Mg(2+) as a cofactor. Requires Co(2+) as cofactor. K(+) is required as a cofactor. In terms of tissue distribution, detected in trichomes (at the protein level).

It localises to the cytoplasm. The catalysed reaction is L-methionine + ATP + H2O = S-adenosyl-L-methionine + phosphate + diphosphate. It functions in the pathway amino-acid biosynthesis; S-adenosyl-L-methionine biosynthesis; S-adenosyl-L-methionine from L-methionine: step 1/1. Functionally, catalyzes the formation of S-adenosylmethionine from methionine and ATP. The reaction comprises two steps that are both catalyzed by the same enzyme: formation of S-adenosylmethionine (AdoMet) and triphosphate, and subsequent hydrolysis of the triphosphate. The polypeptide is S-adenosylmethionine synthase 4 (METK4) (Arabidopsis thaliana (Mouse-ear cress)).